A 266-amino-acid chain; its full sequence is Type III pantothenate kinase (266 aa).

11–18 (DIGNTSTV) is an ATP binding site. 111–114 (GADR) provides a ligand contact to substrate. The active-site Proton acceptor is aspartate 113. Aspartate 135 contacts K(+). Residue threonine 138 participates in ATP binding. Residue threonine 190 coordinates substrate.

Belongs to the type III pantothenate kinase family. In terms of assembly, homodimer. It depends on NH4(+) as a cofactor. K(+) serves as cofactor.

It localises to the cytoplasm. It catalyses the reaction (R)-pantothenate + ATP = (R)-4'-phosphopantothenate + ADP + H(+). The protein operates within cofactor biosynthesis; coenzyme A biosynthesis; CoA from (R)-pantothenate: step 1/5. Its function is as follows. Catalyzes the phosphorylation of pantothenate (Pan), the first step in CoA biosynthesis. This chain is Type III pantothenate kinase, found in Deinococcus geothermalis (strain DSM 11300 / CIP 105573 / AG-3a).